The sequence spans 449 residues: Immunoglobulin gamma-1 heavy chain (449 aa).

Gln-1 bears the Pyrrolidone carboxylic acid mark. Ig-like domains are found at residues 1-96 (QVQL…VYYC), 125-218 (PSVF…KKVE), 240-339 (PSVF…KTIS), and 348-444 (PQVY…KSLS). The segment at 1 to 119 (QVQLVQSGGG…GQGTLVTVSS (119 aa)) is variable (V) domain, involved in antigen recognition. Cystine bridges form between Cys-22–Cys-96, Cys-146–Cys-202, Cys-263–Cys-323, and Cys-369–Cys-427. The N-linked (GlcNAc...) asparagine glycan is linked to Asn-73. Residues 120 to 449 (ASTKGPSVFP…QKSLSLSPGK (330 aa)) form a constant (C) domain region. A glycan (N-linked (GlcNAc...) (complex) asparagine) is linked at Asn-299.

Immunoglobulins are composed of two identical heavy chains and two identical light chains; disulfide-linked.

It is found in the secreted. The protein localises to the cell membrane. Its function is as follows. Immunoglobulins, also known as antibodies, are membrane-bound or secreted glycoproteins produced by B lymphocytes. In the recognition phase of humoral immunity, the membrane-bound immunoglobulins serve as receptors which, upon binding of a specific antigen, trigger the clonal expansion and differentiation of B lymphocytes into immunoglobulins-secreting plasma cells. Secreted immunoglobulins mediate the effector phase of humoral immunity, which results in the elimination of bound antigens. The antigen binding site is formed by the variable domain of one heavy chain, together with that of its associated light chain. Thus, each immunoglobulin has two antigen binding sites with remarkable affinity for a particular antigen. The variable domains are assembled by a process called V-(D)-J rearrangement and can then be subjected to somatic hypermutations which, after exposure to antigen and selection, allow affinity maturation for a particular antigen. The sequence is that of Immunoglobulin gamma-1 heavy chain from Homo sapiens (Human).